The sequence spans 802 residues: Lon protease (802 aa).

Residues 17–211 (SIVMPLFEVV…LFLHILTKHK (195 aa)) enclose the Lon N-terminal domain. 363–370 (GPPGTGKT) is a binding site for ATP. Residues 600–780 (ENVPGVVTGL…EEVLREALDI (181 aa)) form the Lon proteolytic domain. Catalysis depends on residues Ser-686 and Lys-729.

Belongs to the peptidase S16 family. Homohexamer. Organized in a ring with a central cavity.

Its subcellular location is the cytoplasm. The catalysed reaction is Hydrolysis of proteins in presence of ATP.. Its function is as follows. ATP-dependent serine protease that mediates the selective degradation of mutant and abnormal proteins as well as certain short-lived regulatory proteins. Required for cellular homeostasis and for survival from DNA damage and developmental changes induced by stress. Degrades polypeptides processively to yield small peptide fragments that are 5 to 10 amino acids long. Binds to DNA in a double-stranded, site-specific manner. The chain is Lon protease from Methanosarcina barkeri (strain Fusaro / DSM 804).